A 138-amino-acid chain; its full sequence is MNTIHVDVVSAEESIFSGEARFVALPGEAGELGIYPRHTPLITRIKPGAVRIEKEDGTEEFVFVAGGLLEVQPNCVTVLSDTAIRGKDLDETKASEAKAAAEEALKNARSDIDIAMAQSELTVMAAQIAALRKYRQKK.

Belongs to the ATPase epsilon chain family. In terms of assembly, F-type ATPases have 2 components, CF(1) - the catalytic core - and CF(0) - the membrane proton channel. CF(1) has five subunits: alpha(3), beta(3), gamma(1), delta(1), epsilon(1). CF(0) has three main subunits: a, b and c.

It is found in the cell inner membrane. Its function is as follows. Produces ATP from ADP in the presence of a proton gradient across the membrane. The chain is ATP synthase epsilon chain from Polaromonas sp. (strain JS666 / ATCC BAA-500).